Reading from the N-terminus, the 198-residue chain is Undecaprenyl phosphate transporter A (198 aa).

The next 5 helical transmembrane spans lie at 15 to 35 (MGYA…EIVL), 47 to 67 (IGFI…QIFI), 107 to 127 (VVFS…PAGI), 135 to 155 (FVVL…YLGI), and 169 to 189 (GTYT…YFVI).

It belongs to the DedA family.

It is found in the cell membrane. Functionally, flippase that catalyzes the transport of undecaprenyl phosphate (UndP) across the cytoplasmic membrane, from the external side to the cytoplasmic side. Is involved in UndP recycling during peptidoglycan synthesis. The sequence is that of Undecaprenyl phosphate transporter A from Bacillus subtilis (strain 168).